The chain runs to 320 residues: ATP-dependent 6-phosphofructokinase (320 aa).

ATP contacts are provided by residues glycine 11, 72 to 73 (RY), and 102 to 105 (GDGS). A Mg(2+)-binding site is contributed by aspartate 103. Residues 125 to 127 (TID), arginine 162, 169 to 171 (MGR), glutamate 222, arginine 243, and 249 to 252 (HMQR) each bind substrate. Aspartate 127 serves as the catalytic Proton acceptor.

It belongs to the phosphofructokinase type A (PFKA) family. ATP-dependent PFK group I subfamily. Prokaryotic clade 'B1' sub-subfamily. In terms of assembly, homotetramer. The cofactor is Mg(2+).

The protein localises to the cytoplasm. It catalyses the reaction beta-D-fructose 6-phosphate + ATP = beta-D-fructose 1,6-bisphosphate + ADP + H(+). Its pathway is carbohydrate degradation; glycolysis; D-glyceraldehyde 3-phosphate and glycerone phosphate from D-glucose: step 3/4. With respect to regulation, allosterically activated by ADP and other diphosphonucleosides, and allosterically inhibited by phosphoenolpyruvate. In terms of biological role, catalyzes the phosphorylation of D-fructose 6-phosphate to fructose 1,6-bisphosphate by ATP, the first committing step of glycolysis. The polypeptide is ATP-dependent 6-phosphofructokinase (Lactiplantibacillus plantarum (strain ATCC BAA-793 / NCIMB 8826 / WCFS1) (Lactobacillus plantarum)).